We begin with the raw amino-acid sequence, 85 residues long: Teretoxin Tan9.6 (85 aa).

An N-terminal signal peptide occupies residues 1-21; the sequence is MMSKTGALLLTFMILVLFSMA. The propeptide occupies 22-52; sequence AADALGERFEDHEQKIREQDAGVGLLSLMGR.

In terms of processing, contains 3 disulfide bonds. As to expression, expressed by the venom duct.

It is found in the secreted. The sequence is that of Teretoxin Tan9.6 from Terebra anilis (Auger snail).